Here is a 95-residue protein sequence, read N- to C-terminus: Integration host factor subunit beta (95 aa).

Residues 56 to 95 (RAPRTGRNPKTGETVELDGKHVPHFKPGKELRDRVNESIA) are disordered. The segment covering 72–95 (LDGKHVPHFKPGKELRDRVNESIA) has biased composition (basic and acidic residues).

It belongs to the bacterial histone-like protein family. In terms of assembly, heterodimer of an alpha and a beta chain.

Its function is as follows. This protein is one of the two subunits of integration host factor, a specific DNA-binding protein that functions in genetic recombination as well as in transcriptional and translational control. The polypeptide is Integration host factor subunit beta (Pseudoalteromonas translucida (strain TAC 125)).